The following is a 527-amino-acid chain: GMP synthase [glutamine-hydrolyzing] (527 aa).

The region spanning 4-202 (KILILDFGSQ…VLKICGAQPD (199 aa)) is the Glutamine amidotransferase type-1 domain. The Nucleophile role is filled by Cys81. Active-site residues include His176 and Glu178. The GMPS ATP-PPase domain maps to 203–395 (WEMGHYIDEA…LGLPPAMVYR (193 aa)). Residue 230–236 (SGGVDSS) coordinates ATP.

Homodimer.

It catalyses the reaction XMP + L-glutamine + ATP + H2O = GMP + L-glutamate + AMP + diphosphate + 2 H(+). The protein operates within purine metabolism; GMP biosynthesis; GMP from XMP (L-Gln route): step 1/1. Functionally, catalyzes the synthesis of GMP from XMP. This Paraburkholderia xenovorans (strain LB400) protein is GMP synthase [glutamine-hydrolyzing].